The primary structure comprises 264 residues: tRNA pseudouridine synthase A (264 aa).

The Nucleophile role is filled by D52. Y110 contacts substrate.

Belongs to the tRNA pseudouridine synthase TruA family. In terms of assembly, homodimer.

The catalysed reaction is uridine(38/39/40) in tRNA = pseudouridine(38/39/40) in tRNA. Its function is as follows. Formation of pseudouridine at positions 38, 39 and 40 in the anticodon stem and loop of transfer RNAs. The sequence is that of tRNA pseudouridine synthase A from Wigglesworthia glossinidia brevipalpis.